A 313-amino-acid polypeptide reads, in one-letter code: Porphobilinogen deaminase (313 aa).

C242 bears the S-(dipyrrolylmethanemethyl)cysteine mark.

This sequence belongs to the HMBS family. Monomer. Requires dipyrromethane as cofactor.

The catalysed reaction is 4 porphobilinogen + H2O = hydroxymethylbilane + 4 NH4(+). It participates in porphyrin-containing compound metabolism; protoporphyrin-IX biosynthesis; coproporphyrinogen-III from 5-aminolevulinate: step 2/4. Tetrapolymerization of the monopyrrole PBG into the hydroxymethylbilane pre-uroporphyrinogen in several discrete steps. The sequence is that of Porphobilinogen deaminase (hemC) from Proteus mirabilis.